The chain runs to 108 residues: ATP synthase epsilon chain (108 aa).

It belongs to the ATPase epsilon chain family. As to quaternary structure, F-type ATPases have 2 components, CF(1) - the catalytic core - and CF(0) - the membrane proton channel. CF(1) has five subunits: alpha(3), beta(3), gamma(1), delta(1), epsilon(1). CF(0) has three main subunits: a, b and c.

It is found in the cell inner membrane. Its function is as follows. Produces ATP from ADP in the presence of a proton gradient across the membrane. The sequence is that of ATP synthase epsilon chain from Rickettsia bellii (strain OSU 85-389).